We begin with the raw amino-acid sequence, 121 residues long: Somatostatin-1 (121 aa).

The first 24 residues, 1-24, serve as a signal peptide directing secretion; that stretch reads MKMVSSSRLRCLLVLLLSLTASIS. Residues 25–105 constitute a propeptide that is removed on maturation; the sequence is CSFAGQRDSK…SGGPLLAPRE (81 aa). A disordered region spans residues 76–99; sequence NFPLAEGGPEDAHADLERAASGGP. A disulfide bridge connects residues Cys110 and Cys121.

This sequence belongs to the somatostatin family.

The protein localises to the secreted. Its function is as follows. Somatostatin inhibits the release of somatotropin. This chain is Somatostatin-1 (sst1), found in Lophius americanus (American angler).